Reading from the N-terminus, the 245-residue chain is Transcriptional regulatory protein VxrB (245 aa).

The 112-residue stretch at 31-142 (TLLLVEDDKN…ELFARIRAQL (112 aa)) folds into the Response regulatory domain. At Asp78 the chain carries 4-aspartylphosphate. Positions 151 to 245 (DSKVVTSNLT…LRGVGYKMKA (95 aa)) form a DNA-binding region, ompR/PhoB-type.

Phosphorylated by VxrA.

The protein resides in the cytoplasm. In terms of biological role, member of the two-component regulatory system VxrB/VxrA involved in the regulation of diverses processes, including virulence, the type VI secretion system (T6SS) and biofilm formation. VxrB positively regulates the expression of the T6SS, a virulence nanomachine that directly translocates effectors into bacterial or host cells, thereby facilitating colonization by competing with sister cells and intestinal microbiota. In addition, it activates vpsL expression and biofilm formation, and represses motility. May regulate biofilm formation via its regulation of key biofilm regulators and cyclic di-GMP levels. Significantly contributes to both attack and defense via T6SS, while also influencing competition via regulation of biofilm matrix production. Is critical for colonization in the infant mouse model. This is Transcriptional regulatory protein VxrB from Vibrio cholerae serotype O1 (strain ATCC 39315 / El Tor Inaba N16961).